A 260-amino-acid chain; its full sequence is 5'-nucleotidase SurE (260 aa).

Positions 8, 9, 39, and 93 each coordinate a divalent metal cation.

Belongs to the SurE nucleotidase family. It depends on a divalent metal cation as a cofactor.

The protein resides in the cytoplasm. It catalyses the reaction a ribonucleoside 5'-phosphate + H2O = a ribonucleoside + phosphate. In terms of biological role, nucleotidase that shows phosphatase activity on nucleoside 5'-monophosphates. This chain is 5'-nucleotidase SurE, found in Thermofilum pendens (strain DSM 2475 / Hrk 5).